Consider the following 180-residue polypeptide: Free methionine-R-sulfoxide reductase (180 aa).

Residues 99 to 177 (GVCGTAASTK…KLAKLINKSC (79 aa)) enclose the GAF domain.

It belongs to the free Met sulfoxide reductase family.

The protein resides in the cytoplasm. Its subcellular location is the nucleus. The enzyme catalyses [thioredoxin]-disulfide + L-methionine + H2O = L-methionine (R)-S-oxide + [thioredoxin]-dithiol. In terms of biological role, catalyzes the reversible oxidation-reduction of the R-enantiomer of free methionine sulfoxide to methionine. Does not act on S-enantiomer of free methionine sulfoxide or R-enantiomer of dabsylated methionine sulfoxide. Involved in protection against oxidative stress. This is Free methionine-R-sulfoxide reductase from Saccharomyces cerevisiae (strain ATCC 204508 / S288c) (Baker's yeast).